We begin with the raw amino-acid sequence, 181 residues long: Large ribosomal subunit protein uL5 (181 aa).

The protein belongs to the universal ribosomal protein uL5 family. In terms of assembly, part of the 50S ribosomal subunit; part of the 5S rRNA/L5/L18/L25 subcomplex. Contacts the 5S rRNA and the P site tRNA. Forms a bridge to the 30S subunit in the 70S ribosome.

This is one of the proteins that bind and probably mediate the attachment of the 5S RNA into the large ribosomal subunit, where it forms part of the central protuberance. In the 70S ribosome it contacts protein S13 of the 30S subunit (bridge B1b), connecting the 2 subunits; this bridge is implicated in subunit movement. Contacts the P site tRNA; the 5S rRNA and some of its associated proteins might help stabilize positioning of ribosome-bound tRNAs. This is Large ribosomal subunit protein uL5 from Onion yellows phytoplasma (strain OY-M).